We begin with the raw amino-acid sequence, 115 residues long: Large ribosomal subunit protein bL19 (115 aa).

Belongs to the bacterial ribosomal protein bL19 family.

In terms of biological role, this protein is located at the 30S-50S ribosomal subunit interface and may play a role in the structure and function of the aminoacyl-tRNA binding site. In Lacticaseibacillus casei (strain BL23) (Lactobacillus casei), this protein is Large ribosomal subunit protein bL19.